The primary structure comprises 102 residues: Small ribosomal subunit protein uS10 (102 aa).

The protein belongs to the universal ribosomal protein uS10 family. Part of the 30S ribosomal subunit.

Its function is as follows. Involved in the binding of tRNA to the ribosomes. This chain is Small ribosomal subunit protein uS10, found in Pyrococcus horikoshii (strain ATCC 700860 / DSM 12428 / JCM 9974 / NBRC 100139 / OT-3).